Here is a 20-residue protein sequence, read N- to C-terminus: Alpha-amylase (20 aa).

It catalyses the reaction Endohydrolysis of (1-&gt;4)-alpha-D-glucosidic linkages in polysaccharides containing three or more (1-&gt;4)-alpha-linked D-glucose units.. Strongly inhibited by Hg (2+). Inhibited by Zn (2+). Activated by Fe (2+), Mg (2+) and Ba (2+). Functionally, alpha-amylase active towards amylose, starch, amylopectin and maltodextrins. Has lower activity towards glycogen, and is not active towards alpha/beta-cyclodextrin. The sequence is that of Alpha-amylase from Bacillus sp.